The primary structure comprises 416 residues: MSTKQITCRYFMHGVCREGSQCLFSHDLANSKPSTICKYYQKGYCAYGTRCRYDHTRPSAAAGGAVGTMAHSVPSPAFHSPHPPSEVTASIVKTNSHEPGKREKRTLVLRDRNLSGMAERKTQPSMVSNPGSCSDPQPSPEMKPHSYLDAIRSGLDDVEASSSYSNEQQLCPYAAAGECRFGDACVYLHGEVCEICRLQVLHPFDPEQRKAHEKICMLTFEHEMEKAFAFQASQDKVCSICMEVILEKASASERRFGILSNCNHTYCLSCIRQWRCAKQFENPIIKSCPECRVISEFVIPSVYWVEDQNKKNELIEAFKQGMGKKACKYFEQGKGTCPFGSKCLYRHAYPDGRLAEPEKPRKQLSSQGTVRFFNSVRLWDFIENRESRHVPNNEDVDMTELGDLFMHLSGVESSEP.

C3H1-type zinc fingers lie at residues Ser-2–Ala-29 and Ser-31–Pro-58. Residues Asn-113–Thr-122 are compositionally biased toward basic and acidic residues. The disordered stretch occupies residues Asn-113–Met-142. A compositionally biased stretch (polar residues) spans Gln-123 to Pro-136. Position 139 is a phosphoserine (Ser-139). Residues Ser-165–Val-192 form a C3H1-type 3 zinc finger. The makorin-type Cys-His stretch occupies residues Cys-193 to His-222. The segment at Cys-238 to Arg-292 adopts an RING-type zinc-finger fold. The C3H1-type 4 zinc-finger motif lies at Gly-321–Pro-350.

In terms of assembly, interacts with PDLIM2 (via LIM zinc-binding domain). Interacts with RELA. Expressed in sperm, with significantly reduced expression in sperm of patients with oligoasthenoteratozoospermia (at protein level). Widely expressed with expression in testis, ovary, small intestine, colon, peripheral blood leukocytes, fetal liver, bone marrow, thymus, lymph node and spleen.

Its subcellular location is the cytoplasm. It localises to the nucleus. The catalysed reaction is S-ubiquitinyl-[E2 ubiquitin-conjugating enzyme]-L-cysteine + [acceptor protein]-L-lysine = [E2 ubiquitin-conjugating enzyme]-L-cysteine + N(6)-ubiquitinyl-[acceptor protein]-L-lysine.. It functions in the pathway protein modification; protein ubiquitination. Its function is as follows. E3 ubiquitin ligase catalyzing the covalent attachment of ubiquitin moieties onto substrate proteins. Promotes the polyubiquitination and proteasome-dependent degradation of RELA/p65, thereby suppressing RELA-mediated NF-kappaB transactivation and negatively regulating inflammatory responses. Plays a role in the regulation of spermiation and in male fertility. The sequence is that of E3 ubiquitin-protein ligase makorin-2 (MKRN2) from Homo sapiens (Human).